Here is a 104-residue protein sequence, read N- to C-terminus: MRSLLCAPLLLLLLSAGESAVITGACDKDLQCGEGMCCAVSLWIRSIRICTPLGSSGEDCHPLSHKVPFDGQRKHHTCPCLPNLVCGQTSPGKHKCLPEFKNVF.

The first 19 residues, 1–19 (MRSLLCAPLLLLLLSAGES), serve as a signal peptide directing secretion. Intrachain disulfides connect cysteine 26–cysteine 38, cysteine 32–cysteine 50, cysteine 37–cysteine 78, cysteine 60–cysteine 86, and cysteine 80–cysteine 96.

Belongs to the AVIT (prokineticin) family. Expressed by the venom gland.

It localises to the secreted. Functionally, potent agonist for both PKR1/PROKR1 and PKR2/PROKR2. Potently contracts gastrointestinal (GI) smooth muscle. The polypeptide is AVIToxin-VAR2 (Varanus varius (Lace monitor lizard)).